The primary structure comprises 151 residues: Large ribosomal subunit protein bL9 (151 aa).

The protein belongs to the bacterial ribosomal protein bL9 family.

In terms of biological role, binds to the 23S rRNA. In Lactobacillus johnsonii (strain CNCM I-12250 / La1 / NCC 533), this protein is Large ribosomal subunit protein bL9.